The chain runs to 306 residues: N-acetylmuramic acid 6-phosphate etherase (306 aa).

The 164-residue stretch at 55–218 folds into the SIS domain; it reads IVPRMKKGGR…STGVMIKLGK (164 aa). Catalysis depends on E83, which acts as the Proton donor. The active site involves E114.

The protein belongs to the GCKR-like family. MurNAc-6-P etherase subfamily. In terms of assembly, homodimer.

The catalysed reaction is N-acetyl-D-muramate 6-phosphate + H2O = N-acetyl-D-glucosamine 6-phosphate + (R)-lactate. It functions in the pathway amino-sugar metabolism; N-acetylmuramate degradation. Functionally, specifically catalyzes the cleavage of the D-lactyl ether substituent of MurNAc 6-phosphate, producing GlcNAc 6-phosphate and D-lactate. The polypeptide is N-acetylmuramic acid 6-phosphate etherase (Caldanaerobacter subterraneus subsp. tengcongensis (strain DSM 15242 / JCM 11007 / NBRC 100824 / MB4) (Thermoanaerobacter tengcongensis)).